The following is a 22-amino-acid chain: GADDSDWRKKGAVNVIXKDQGQ.

The interval Gly1–Gln22 is disordered.

Belongs to the peptidase C1 family.

The protein is Cysteine proteinase of Trichomonas vaginalis.